Reading from the N-terminus, the 113-residue chain is Hydrogenase maturation factor HypA (113 aa).

Residue His2 participates in Ni(2+) binding. Residues Cys73, Cys76, Cys89, and Cys92 each coordinate Zn(2+).

Belongs to the HypA/HybF family.

Involved in the maturation of [NiFe] hydrogenases. Required for nickel insertion into the metal center of the hydrogenase. The protein is Hydrogenase maturation factor HypA of Cereibacter sphaeroides (strain KD131 / KCTC 12085) (Rhodobacter sphaeroides).